We begin with the raw amino-acid sequence, 405 residues long: Probable tRNA sulfurtransferase (405 aa).

The THUMP domain maps to 75–183; that stretch reads PRAAGAAADV…QNLAYVYLET (109 aa). Residues 201–202, lysine 285, glycine 307, and glutamine 316 contribute to the ATP site; that span reads LM.

It belongs to the ThiI family.

It localises to the cytoplasm. The enzyme catalyses [ThiI sulfur-carrier protein]-S-sulfanyl-L-cysteine + a uridine in tRNA + 2 reduced [2Fe-2S]-[ferredoxin] + ATP + H(+) = [ThiI sulfur-carrier protein]-L-cysteine + a 4-thiouridine in tRNA + 2 oxidized [2Fe-2S]-[ferredoxin] + AMP + diphosphate. The catalysed reaction is [ThiS sulfur-carrier protein]-C-terminal Gly-Gly-AMP + S-sulfanyl-L-cysteinyl-[cysteine desulfurase] + AH2 = [ThiS sulfur-carrier protein]-C-terminal-Gly-aminoethanethioate + L-cysteinyl-[cysteine desulfurase] + A + AMP + 2 H(+). The protein operates within cofactor biosynthesis; thiamine diphosphate biosynthesis. Its function is as follows. Catalyzes the ATP-dependent transfer of a sulfur to tRNA to produce 4-thiouridine in position 8 of tRNAs, which functions as a near-UV photosensor. Also catalyzes the transfer of sulfur to the sulfur carrier protein ThiS, forming ThiS-thiocarboxylate. This is a step in the synthesis of thiazole, in the thiamine biosynthesis pathway. The sulfur is donated as persulfide by IscS. The polypeptide is Probable tRNA sulfurtransferase (Methanosarcina mazei (strain ATCC BAA-159 / DSM 3647 / Goe1 / Go1 / JCM 11833 / OCM 88) (Methanosarcina frisia)).